Here is a 194-residue protein sequence, read N- to C-terminus: MNVNNVEMVMSAVSAAQYPTDGKPEIALVGRSNVGKSSLTNTLIQRKNFARTSSQPGKTQTLNFYDVENQLYFVDVPGYGYAKVSKKQREAFGNMIEEYITSRKQLRGVISLVDARHDPSEDDVAMYEWLHYYNIPILVVATKSDKISKSKFNKYENNIKKQLGFDSSASDFLFFSSETKYGRDSVWEWITAHM.

The EngB-type G domain maps to 22–194 (GKPEIALVGR…SVWEWITAHM (173 aa)). GTP contacts are provided by residues 30-37 (GRSNVGKS), 57-61 (GKTQT), 75-78 (DVPG), 142-145 (TKSD), and 175-177 (FSS). Mg(2+) is bound by residues Ser37 and Thr59.

Belongs to the TRAFAC class TrmE-Era-EngA-EngB-Septin-like GTPase superfamily. EngB GTPase family. The cofactor is Mg(2+).

In terms of biological role, necessary for normal cell division and for the maintenance of normal septation. This chain is Probable GTP-binding protein EngB, found in Leuconostoc citreum (strain KM20).